A 204-amino-acid polypeptide reads, in one-letter code: Sec-independent protein translocase protein TatB (204 aa).

Residues 1–21 (MFDIGFSELLLIFIVGLVVLG) form a helical membrane-spanning segment. Polar residues predominate over residues 154-166 (VVSSVDSIQNGQS). Residues 154 to 204 (VVSSVDSIQNGQSDLELDAQAEVDRQLAAMMDKYAPPDDVAENPISTEKTS) form a disordered region.

Belongs to the TatB family. In terms of assembly, the Tat system comprises two distinct complexes: a TatABC complex, containing multiple copies of TatA, TatB and TatC subunits, and a separate TatA complex, containing only TatA subunits. Substrates initially bind to the TatABC complex, which probably triggers association of the separate TatA complex to form the active translocon.

It localises to the cell inner membrane. Part of the twin-arginine translocation (Tat) system that transports large folded proteins containing a characteristic twin-arginine motif in their signal peptide across membranes. Together with TatC, TatB is part of a receptor directly interacting with Tat signal peptides. TatB may form an oligomeric binding site that transiently accommodates folded Tat precursor proteins before their translocation. The chain is Sec-independent protein translocase protein TatB from Mannheimia succiniciproducens (strain KCTC 0769BP / MBEL55E).